The chain runs to 250 residues: DNA polymerase sliding clamp (250 aa).

The protein belongs to the PCNA family. As to quaternary structure, homotrimer. The subunits circularize to form a toroid; DNA passes through its center. Replication factor C (RFC) is required to load the toroid on the DNA.

Functionally, sliding clamp subunit that acts as a moving platform for DNA processing. Responsible for tethering the catalytic subunit of DNA polymerase and other proteins to DNA during high-speed replication. The chain is DNA polymerase sliding clamp from Methanococcus maripaludis (strain C7 / ATCC BAA-1331).